We begin with the raw amino-acid sequence, 277 residues long: 3-methyl-2-oxobutanoate hydroxymethyltransferase (277 aa).

Mg(2+)-binding residues include aspartate 42 and aspartate 81. Residues 42–43 (DS), aspartate 81, and lysine 110 each bind 3-methyl-2-oxobutanoate. Mg(2+) is bound at residue glutamate 112. Glutamate 179 (proton acceptor) is an active-site residue.

The protein belongs to the PanB family. In terms of assembly, homodecamer; pentamer of dimers. Mg(2+) serves as cofactor.

It localises to the cytoplasm. It catalyses the reaction 3-methyl-2-oxobutanoate + (6R)-5,10-methylene-5,6,7,8-tetrahydrofolate + H2O = 2-dehydropantoate + (6S)-5,6,7,8-tetrahydrofolate. It functions in the pathway cofactor biosynthesis; (R)-pantothenate biosynthesis; (R)-pantoate from 3-methyl-2-oxobutanoate: step 1/2. In terms of biological role, catalyzes the reversible reaction in which hydroxymethyl group from 5,10-methylenetetrahydrofolate is transferred onto alpha-ketoisovalerate to form ketopantoate. This Anaplasma marginale (strain Florida) protein is 3-methyl-2-oxobutanoate hydroxymethyltransferase.